We begin with the raw amino-acid sequence, 1997 residues long: Receptor-type tyrosine-protein phosphatase beta (1997 aa).

The signal sequence occupies residues 1–22; that stretch reads MLSHGAGLALWITLSLLQTGLA. Fibronectin type-III domains lie at 23–111, 112–207, 203–288, 291–378, 379–471, 467–552, 556–641, 642–729, 730–829, 819–906, 909–1001, 995–1083, 1087–1175, 1173–1260, 1260–1356, 1357–1448, and 1458–1554; these read EPER…TDPL, PPAR…SPVK, PSPV…VRTA, EVSN…TFPD, KVAN…LAVL, PLAV…KGRT, QVTD…EGRT, VPSS…QERT, VPDK…TLRN, PEPV…GFTV, AVKN…VQGV, PASV…EGRT, AVTD…VPAS, PASV…SRTA, APSP…TKPD, KIQN…IDRP, and NEKD…EMES. The Extracellular portion of the chain corresponds to 23-1621; the sequence is EPERCNFTLA…ESEPLFGAIE (1599 aa). Asn-28, Asn-53, Asn-75, Asn-172, Asn-198, Asn-267, Asn-321, Asn-414, Asn-421, Asn-479, Asn-544, Asn-574, Asn-598, Asn-652, Asn-721, and Asn-829 each carry an N-linked (GlcNAc...) asparagine glycan. 10 N-linked (GlcNAc...) asparagine glycosylation sites follow: Asn-1040, Asn-1096, Asn-1163, Asn-1185, Asn-1212, Asn-1274, Asn-1367, Asn-1470, Asn-1474, and Asn-1518. A helical transmembrane segment spans residues 1622–1642; that stretch reads GVSAGLFLIGMLVAVVALLIC. The Cytoplasmic portion of the chain corresponds to 1643–1997; sequence RQKVSHGRER…YHRDPVYSRH (355 aa). Residues 1703-1963 form the Tyrosine-protein phosphatase domain; sequence LSKEYEELKD…VYLHQCVRDV (261 aa). Substrate contacts are provided by residues Asp-1870, 1904–1910, and Gln-1948; that span reads CSAGVGR. Cys-1904 acts as the Phosphocysteine intermediate in catalysis. Tyr-1981 is modified (phosphotyrosine).

This sequence belongs to the protein-tyrosine phosphatase family. Receptor class 3 subfamily. In terms of assembly, monomer. Interacts with TEK. Interacts via fibronectin type-III 17 domain with CDH5. Detected in a complex with CNTN1 and NRCAM. Interacts (phosphorylated form) with FYN and GRB2. Interacts with IGFBP2.

The protein resides in the membrane. The enzyme catalyses O-phospho-L-tyrosyl-[protein] + H2O = L-tyrosyl-[protein] + phosphate. Its function is as follows. Plays an important role in blood vessel remodeling and angiogenesis. Not necessary for the initial formation of blood vessels, but is essential for their maintenance and remodeling. Can induce dephosphorylation of TEK/TIE2, CDH5/VE-cadherin and KDR/VEGFR-2. Regulates angiopoietin-TIE2 signaling in endothelial cells. Acts as a negative regulator of TIE2, and controls TIE2 driven endothelial cell proliferation, which in turn affects blood vessel remodeling during embryonic development and determines blood vessel size during perinatal growth. Essential for the maintenance of endothelial cell contact integrity and for the adhesive function of VE-cadherin in endothelial cells and this requires the presence of plakoglobin. In Homo sapiens (Human), this protein is Receptor-type tyrosine-protein phosphatase beta (PTPRB).